We begin with the raw amino-acid sequence, 127 residues long: Egg cell-secreted protein 1.4 (127 aa).

A signal peptide spans 1–25; it reads MASNTTFLFSTVTLLIILLNTTVSG.

It belongs to the plant egg cell-secreted peptide family. Restricted to female reproductive tissues, specifically accumulating in storage vesicles of the unfertilized egg cell.

Its subcellular location is the cytoplasmic vesicle. The protein localises to the secreted. Involved in the regulation of gamete interactions during the double fertilization and to prevent multiple-pollen tube attraction; mediates the redistribution of the gamete fusogen HAP2/GCS1 to the cell surface after secretion upon sperm arrival. The sequence is that of Egg cell-secreted protein 1.4 (EC1.4) from Arabidopsis thaliana (Mouse-ear cress).